Here is a 191-residue protein sequence, read N- to C-terminus: Protein Ves (191 aa).

The protein belongs to the Ves family.

The polypeptide is Protein Ves (Citrobacter koseri (strain ATCC BAA-895 / CDC 4225-83 / SGSC4696)).